The sequence spans 537 residues: Eukaryotic translation initiation factor 3 subunit L (537 aa).

Over residues 1–19 (MSRRVEFDMSHEDHTDRRR) the composition is skewed to basic and acidic residues. The disordered stretch occupies residues 1 to 28 (MSRRVEFDMSHEDHTDRRRTNTFSSEED). The region spanning 297 to 485 (EATKMFVNCL…GPSTVDDDEP (189 aa)) is the PCI domain.

Belongs to the eIF-3 subunit L family. In terms of assembly, component of the eukaryotic translation initiation factor 3 (eIF-3) complex.

Its subcellular location is the cytoplasm. In terms of biological role, component of the eukaryotic translation initiation factor 3 (eIF-3) complex, which is involved in protein synthesis of a specialized repertoire of mRNAs and, together with other initiation factors, stimulates binding of mRNA and methionyl-tRNAi to the 40S ribosome. The eIF-3 complex specifically targets and initiates translation of a subset of mRNAs involved in cell proliferation. The sequence is that of Eukaryotic translation initiation factor 3 subunit L from Caenorhabditis briggsae.